Here is a 436-residue protein sequence, read N- to C-terminus: 3-ketoacyl-CoA thiolase (436 aa).

Residue C99 is the Acyl-thioester intermediate of the active site. Active-site proton acceptor residues include H392 and C422.

This sequence belongs to the thiolase-like superfamily. Thiolase family. In terms of assembly, heterotetramer of two alpha chains (FadJ) and two beta chains (FadI).

It localises to the cytoplasm. The enzyme catalyses an acyl-CoA + acetyl-CoA = a 3-oxoacyl-CoA + CoA. It functions in the pathway lipid metabolism; fatty acid beta-oxidation. In terms of biological role, catalyzes the final step of fatty acid oxidation in which acetyl-CoA is released and the CoA ester of a fatty acid two carbons shorter is formed. This chain is 3-ketoacyl-CoA thiolase, found in Salmonella dublin (strain CT_02021853).